A 59-amino-acid polypeptide reads, in one-letter code: DNA gyrase inhibitor YacG (59 aa).

Zn(2+)-binding residues include Cys9, Cys12, Cys27, and Cys31.

The protein belongs to the DNA gyrase inhibitor YacG family. As to quaternary structure, interacts with GyrB. Zn(2+) is required as a cofactor.

Functionally, inhibits all the catalytic activities of DNA gyrase by preventing its interaction with DNA. Acts by binding directly to the C-terminal domain of GyrB, which probably disrupts DNA binding by the gyrase. The polypeptide is DNA gyrase inhibitor YacG (Geotalea daltonii (strain DSM 22248 / JCM 15807 / FRC-32) (Geobacter daltonii)).